The sequence spans 391 residues: Multidrug resistance protein MdtL (391 aa).

The Cytoplasmic portion of the chain corresponds to 1–3 (MSR). Residues 4–24 (FLICSFALVLLYPAGIDMYLV) form a helical membrane-spanning segment. Residues 25–37 (GLPRIAADLNASE) are Periplasmic-facing. A helical membrane pass occupies residues 38–58 (AQLHIAFSVYLAGMAAAMLFA). Over 59–75 (GKMADRSGRKPVAIPGS) the chain is Cytoplasmic. The helical transmembrane segment at 76-96 (ALFIIASVFCSLAETSTLFLA) threads the bilayer. The Periplasmic segment spans residues 97 to 98 (GR). The chain crosses the membrane as a helical span at residues 99–119 (FLQGLGAGCCYVVAFAILRDT). The Cytoplasmic segment spans residues 120–130 (LDDRRRAKVLS). The chain crosses the membrane as a helical span at residues 131–151 (LLNGITCIIPVLAPVLGHLIM). Residues 152-157 (LKFPWQ) lie on the Periplasmic side of the membrane. The helical transmembrane segment at 158–178 (SLFWAMAMMGIAVLMLSLFIL) threads the bilayer. Over 179–202 (KETRPASPAASDKPRENSESLLNR) the chain is Cytoplasmic. A helical membrane pass occupies residues 203 to 222 (FFLSRVVITTLSVSVILTFV). Topologically, residues 223–244 (NTSPVLLMEIMGFERGEYATIM) are periplasmic. A helical membrane pass occupies residues 245 to 265 (ALTAGVSMTFSFSTPFALGIF). Residues 266–268 (KPR) lie on the Cytoplasmic side of the membrane. A helical transmembrane segment spans residues 269-289 (TLMITSQVLFLAAGITLAVSP). The Periplasmic portion of the chain corresponds to 290–292 (SHA). A helical transmembrane segment spans residues 293–313 (VSLFGITLICAGFSVGFGVAM). The Cytoplasmic portion of the chain corresponds to 314-330 (SQALGPFSLRAGVASST). Residues 331–351 (LGIAQVCGSSLWIWLAAVVGI) traverse the membrane as a helical segment. At 352–355 (GAWN) the chain is on the periplasmic side. A helical membrane pass occupies residues 356–376 (MLIGILIACSIVSLLLIMFVA). Topologically, residues 377–391 (PGRPVAAHEEIHHHA) are cytoplasmic.

Belongs to the major facilitator superfamily. DHA1 family. MdtL (TC 2.A.1.2.22) subfamily.

The protein resides in the cell inner membrane. The protein is Multidrug resistance protein MdtL of Shigella flexneri serotype 5b (strain 8401).